We begin with the raw amino-acid sequence, 1940 residues long: Myosin-13 (1940 aa).

In terms of domain architecture, Myosin N-terminal SH3-like spans 33–82 (DSKKACFAMDDKEMYVKGMIQSRENDKVTVKTLDDRTLTLNSDQVFPMNP). The 697-residue stretch at 86-782 (DKIEDMAMMT…LLGLLEEMRD (697 aa)) folds into the Myosin motor domain. Lys-130 is subject to N6,N6,N6-trimethyllysine. Position 179 to 186 (179 to 186 (GESGAGKT)) interacts with ATP. 2 actin-binding regions span residues 659-681 (LNKL…IPNE) and 761-775 (RFGH…GLLG). The region spanning 785–814 (LVTLMTRTQAICRGYLMRVEFKKMMERRES) is the IQ domain. Residues 843–1940 (LLKSAEAERE…RDVGAQKMEE (1098 aa)) are a coiled coil. The segment at 1886–1940 (RQAEEAEEQANTQMSKCRRVQHELEEAEERADIAESQVNKLRAKSRDVGAQKMEE) is disordered. Over residues 1929–1940 (KSRDVGAQKMEE) the composition is skewed to basic and acidic residues.

This sequence belongs to the TRAFAC class myosin-kinesin ATPase superfamily. Myosin family. As to quaternary structure, muscle myosin is a hexameric protein that consists of 2 heavy chain subunits (MHC), 2 alkali light chain subunits (MLC) and 2 regulatory light chain subunits (MLC-2).

The protein localises to the cytoplasm. Its subcellular location is the myofibril. Its function is as follows. Fast twitching myosin mediating the high-velocity and low-tension contractions of specific striated muscles. The polypeptide is Myosin-13 (MYH13) (Canis lupus familiaris (Dog)).